Consider the following 293-residue polypeptide: tRNA pseudouridine synthase B (293 aa).

The active-site Nucleophile is Asp-39.

It belongs to the pseudouridine synthase TruB family. Type 1 subfamily.

The enzyme catalyses uridine(55) in tRNA = pseudouridine(55) in tRNA. Functionally, responsible for synthesis of pseudouridine from uracil-55 in the psi GC loop of transfer RNAs. The sequence is that of tRNA pseudouridine synthase B from Rickettsia bellii (strain RML369-C).